The following is a 436-amino-acid chain: GTPase Der (436 aa).

EngA-type G domains lie at 4–167 (PTVA…PNEI) and 175–351 (IKFS…HAQN). Residues 10–17 (GRPNVGKS), 57–61 (DTGGI), 119–122 (NKVD), 181–188 (GRPNVGKS), 229–233 (DTAGM), and 294–297 (NKWD) each bind GTP. The region spanning 352-436 (LRISSSVLND…PVHLIARKRK (85 aa)) is the KH-like domain.

The protein belongs to the TRAFAC class TrmE-Era-EngA-EngB-Septin-like GTPase superfamily. EngA (Der) GTPase family. In terms of assembly, associates with the 50S ribosomal subunit.

Functionally, GTPase that plays an essential role in the late steps of ribosome biogenesis. The sequence is that of GTPase Der from Lactococcus lactis subsp. lactis (strain IL1403) (Streptococcus lactis).